The following is a 91-amino-acid chain: Large ribosomal subunit protein bL27 (91 aa).

The tract at residues 1-26 (MAHKKGVGSSRNGRDSNPKMRGVKRF) is disordered.

The protein belongs to the bacterial ribosomal protein bL27 family.

The sequence is that of Large ribosomal subunit protein bL27 from Chloroflexus aurantiacus (strain ATCC 29366 / DSM 635 / J-10-fl).